Consider the following 318-residue polypeptide: Ribosomal RNA small subunit methyltransferase H (318 aa).

S-adenosyl-L-methionine is bound by residues 38 to 40 (GGH), D58, Y86, D107, and Q114.

Belongs to the methyltransferase superfamily. RsmH family.

The protein localises to the cytoplasm. The catalysed reaction is cytidine(1402) in 16S rRNA + S-adenosyl-L-methionine = N(4)-methylcytidine(1402) in 16S rRNA + S-adenosyl-L-homocysteine + H(+). Its function is as follows. Specifically methylates the N4 position of cytidine in position 1402 (C1402) of 16S rRNA. The sequence is that of Ribosomal RNA small subunit methyltransferase H from Methylibium petroleiphilum (strain ATCC BAA-1232 / LMG 22953 / PM1).